Reading from the N-terminus, the 147-residue chain is UPF0306 protein YPTB0506 (147 aa).

The protein belongs to the UPF0306 family.

This is UPF0306 protein YPTB0506 from Yersinia pseudotuberculosis serotype I (strain IP32953).